We begin with the raw amino-acid sequence, 70 residues long: NADH-ubiquinone oxidoreductase chain 3 (70 aa).

The chain crosses the membrane as a helical span at residues 42 to 62; the sequence is FFVITLIFLIFDVEIYLLLPM.

Belongs to the complex I subunit 3 family.

The protein localises to the mitochondrion membrane. It carries out the reaction a ubiquinone + NADH + 5 H(+)(in) = a ubiquinol + NAD(+) + 4 H(+)(out). Its function is as follows. Core subunit of the mitochondrial membrane respiratory chain NADH dehydrogenase (Complex I) that is believed to belong to the minimal assembly required for catalysis. Complex I functions in the transfer of electrons from NADH to the respiratory chain. The immediate electron acceptor for the enzyme is believed to be ubiquinone. This is NADH-ubiquinone oxidoreductase chain 3 (ND3) from Artemia salina (Brine shrimp).